The primary structure comprises 245 residues: Biosynthetic peptidoglycan transglycosylase (245 aa).

A helical transmembrane segment spans residues 19–39 (IVYAGAVFAAAWLATQLFYFV).

Belongs to the glycosyltransferase 51 family.

It localises to the cell inner membrane. It carries out the reaction [GlcNAc-(1-&gt;4)-Mur2Ac(oyl-L-Ala-gamma-D-Glu-L-Lys-D-Ala-D-Ala)](n)-di-trans,octa-cis-undecaprenyl diphosphate + beta-D-GlcNAc-(1-&gt;4)-Mur2Ac(oyl-L-Ala-gamma-D-Glu-L-Lys-D-Ala-D-Ala)-di-trans,octa-cis-undecaprenyl diphosphate = [GlcNAc-(1-&gt;4)-Mur2Ac(oyl-L-Ala-gamma-D-Glu-L-Lys-D-Ala-D-Ala)](n+1)-di-trans,octa-cis-undecaprenyl diphosphate + di-trans,octa-cis-undecaprenyl diphosphate + H(+). It participates in cell wall biogenesis; peptidoglycan biosynthesis. In terms of biological role, peptidoglycan polymerase that catalyzes glycan chain elongation from lipid-linked precursors. This chain is Biosynthetic peptidoglycan transglycosylase, found in Burkholderia multivorans (strain ATCC 17616 / 249).